The sequence spans 495 residues: UPF0371 protein cgR_2887 (495 aa).

This sequence belongs to the UPF0371 family.

The protein is UPF0371 protein cgR_2887 of Corynebacterium glutamicum (strain R).